The sequence spans 271 residues: Dermonecrotic toxin LarSicTox-alphaIB1c (271 aa).

H3 is a catalytic residue. Mg(2+)-binding residues include E23 and D25. H39 (nucleophile) is an active-site residue. Intrachain disulfides connect C43–C49 and C45–C188. D83 provides a ligand contact to Mg(2+). N248 carries N-linked (GlcNAc...) asparagine glycosylation.

The protein belongs to the arthropod phospholipase D family. Class II subfamily. The cofactor is Mg(2+). Expressed by the venom gland.

It is found in the secreted. It carries out the reaction an N-(acyl)-sphingosylphosphocholine = an N-(acyl)-sphingosyl-1,3-cyclic phosphate + choline. The catalysed reaction is an N-(acyl)-sphingosylphosphoethanolamine = an N-(acyl)-sphingosyl-1,3-cyclic phosphate + ethanolamine. The enzyme catalyses a 1-acyl-sn-glycero-3-phosphocholine = a 1-acyl-sn-glycero-2,3-cyclic phosphate + choline. It catalyses the reaction a 1-acyl-sn-glycero-3-phosphoethanolamine = a 1-acyl-sn-glycero-2,3-cyclic phosphate + ethanolamine. Functionally, dermonecrotic toxins cleave the phosphodiester linkage between the phosphate and headgroup of certain phospholipids (sphingolipid and lysolipid substrates), forming an alcohol (often choline) and a cyclic phosphate. This toxin acts on sphingomyelin (SM). It may also act on ceramide phosphoethanolamine (CPE), lysophosphatidylcholine (LPC) and lysophosphatidylethanolamine (LPE), but not on lysophosphatidylserine (LPS), and lysophosphatidylglycerol (LPG). It acts by transphosphatidylation, releasing exclusively cyclic phosphate products as second products. Induces dermonecrosis, hemolysis, increased vascular permeability, edema, inflammatory response, and platelet aggregation. This is Dermonecrotic toxin LarSicTox-alphaIB1c from Loxosceles arizonica (Arizona brown spider).